A 51-amino-acid polypeptide reads, in one-letter code: Insulin (51 aa).

Disulfide bonds link C7-C37, C19-C50, and C36-C41.

The protein belongs to the insulin family. In terms of assembly, heterodimer of a B chain and an A chain linked by two disulfide bonds.

The protein resides in the secreted. Its function is as follows. Insulin decreases blood glucose concentration. It increases cell permeability to monosaccharides, amino acids and fatty acids. It accelerates glycolysis, the pentose phosphate cycle, and glycogen synthesis in liver. The sequence is that of Insulin (INS) from Acomys cahirinus (Cairo spiny mouse).